The chain runs to 72 residues: MSKEDMIEFSGTVAELLPNAMFRVKLDNDHIILAHTSGKMRKNRIRVLAGDRVNVEMTPYDLTKGRITFRFK.

The S1-like domain maps to 1–72; that stretch reads MSKEDMIEFS…TKGRITFRFK (72 aa).

Belongs to the IF-1 family. Component of the 30S ribosomal translation pre-initiation complex which assembles on the 30S ribosome in the order IF-2 and IF-3, IF-1 and N-formylmethionyl-tRNA(fMet); mRNA recruitment can occur at any time during PIC assembly.

The protein localises to the cytoplasm. Functionally, one of the essential components for the initiation of protein synthesis. Stabilizes the binding of IF-2 and IF-3 on the 30S subunit to which N-formylmethionyl-tRNA(fMet) subsequently binds. Helps modulate mRNA selection, yielding the 30S pre-initiation complex (PIC). Upon addition of the 50S ribosomal subunit IF-1, IF-2 and IF-3 are released leaving the mature 70S translation initiation complex. This chain is Translation initiation factor IF-1, found in Acidiphilium cryptum (strain JF-5).